The chain runs to 474 residues: Stabilizer of axonemal microtubules 1 (474 aa).

Mn stretches follow at residues 30–64, 65–97, 98–131, 132–165, 166–199, 200–232, 233–266, 267–299, 300–332, 333–366, 367–400, and 401–434; these read KPCL…KGSI, PMEG…PSEE, NMDL…PYSN, KMEY…PASV, RFDN…LCNI, PLED…PCEI, PFES…GLDM, PFSN…PPED, SMDL…RKSG, RFEG…FPTE, PLDC…RGNV, and PVEG…TFEE. Residues 318 to 350 are disordered; it reads PARSCRPAPQIRKSGRFEGSSTTKDDYKQWSSM. Residues 444-474 are disordered; it reads KPVSQAGSQQSSHLSVDDSENPSQRKLEVSA. A compositionally biased stretch (polar residues) spans 448 to 457; that stretch reads QAGSQQSSHL.

This sequence belongs to the FAM154 family. Associates with microtubules via the Mn regions.

Its subcellular location is the cytoplasm. The protein localises to the cytoskeleton. The protein resides in the microtubule organizing center. It localises to the centrosome. It is found in the centriole. Its subcellular location is the cilium basal body. The protein localises to the cilium axoneme. The protein resides in the flagellum axoneme. Functionally, may play a role in the regulation of cilium length. Stabilizes microtubules at low temperature. This Macaca fascicularis (Crab-eating macaque) protein is Stabilizer of axonemal microtubules 1 (SAXO1).